Here is a 369-residue protein sequence, read N- to C-terminus: Flagellar P-ring protein (369 aa).

A signal peptide spans 1–22 (MTKFKHLLALAALLLAAGAAQA).

This sequence belongs to the FlgI family. As to quaternary structure, the basal body constitutes a major portion of the flagellar organelle and consists of four rings (L,P,S, and M) mounted on a central rod.

It is found in the periplasm. The protein resides in the bacterial flagellum basal body. Its function is as follows. Assembles around the rod to form the L-ring and probably protects the motor/basal body from shearing forces during rotation. The polypeptide is Flagellar P-ring protein (Pseudomonas aeruginosa (strain LESB58)).